Consider the following 405-residue polypeptide: MAGRGCSCSPGHLNEDNARFLLLAGLILLYLLGGAAVFSALELAQELQAKQRWEERLANFSRGHNLSREELRGFLRHYEEATKAGIRMDSVRPRWDFTGAFYFVGTVVTTIGFGMTTPATTGGKVFLIFYGLIGCASTILFFNLFLERLITVIAYVMRTCHHQQLRRRGTVARDNRKAPRKGEADSLAGWKPSVYYVMLILCLASVAISCGASALYTTMEGWSYFDSVYFCFVASSTIGFGDLVSSQNAQYENEGLYRFVNFFFILMGVCCIYSMFNVISILIKQTVNWILRKLDSGCFPQCQRGLLRSRRNVVMPGNIRNRCNISIETDGVMESDTDGRRLSGEMISMKDTNKVSLAILQKQLSEMANGGPHQTSTSSRDDEFSGGVGAFAVMNNRLAETSGDR.

The Cytoplasmic segment spans residues 1–19 (MAGRGCSCSPGHLNEDNAR). Residues 20–40 (FLLLAGLILLYLLGGAAVFSA) traverse the membrane as a helical segment. 2 N-linked (GlcNAc...) asparagine glycosylation sites follow: Asn-59 and Asn-65. Positions 95-115 (WDFTGAFYFVGTVVTTIGFGM) form an intramembrane region, pore-forming. Residues Thr-110, Ile-111, and Gly-112 each coordinate K(+). Residues 110–115 (TIGFGM) form a selectivity filter 1 region. Residues 125–145 (VFLIFYGLIGCASTILFFNLF) form a helical membrane-spanning segment. Over 146–193 (LERLITVIAYVMRTCHHQQLRRRGTVARDNRKAPRKGEADSLAGWKPS) the chain is Cytoplasmic. The helical transmembrane segment at 194–214 (VYYVMLILCLASVAISCGASA) threads the bilayer. Residues 224-244 (YFDSVYFCFVASSTIGFGDLV) constitute an intramembrane region (pore-forming). K(+)-binding residues include Thr-237, Ile-238, Gly-239, and Phe-240. Residues 237 to 242 (TIGFGD) are selectivity filter 2. Residues 263–283 (FFILMGVCCIYSMFNVISILI) form a helical membrane-spanning segment. Over 284-405 (KQTVNWILRK…NRLAETSGDR (122 aa)) the chain is Cytoplasmic.

Belongs to the two pore domain potassium channel (TC 1.A.1.8) family. Homodimer. Heterodimer with KCNK12. Ubiquitous. In brain expression is rather low and restricted to the olfactory bulb and tubercle, to the ventromedial hypothalamic nucleus, lateral septal nucleus dorsal, lateral mammillary nucleus, lateral parabrachial nuclei, reticular nucleus and reunions nuclei.

The protein localises to the cell membrane. It carries out the reaction K(+)(in) = K(+)(out). With respect to regulation, the channel currents are activated by arachidonic acid, inhibited by volatile anesthetic halothane, partially inhibited by Ba(2+) ions and only weakly inhibited by extracellular acidification to pH 6. Its function is as follows. K(+) channel that conducts outward rectifying tonic currents potentiated by purinergic signals. Homo- and heterodimerizes to form functional channels with distinct regulatory and gating properties. Contributes most of K(+) currents at the plasma membrane of resting microglia. Maintains a depolarized membrane potential required for proper ramified microglia morphology and phagocytosis, selectively mediating microglial pruning of presynaptic compartments at hippocampal excitatory synapses. Upon local release of ATP caused by neuronal injury or infection, it is potentiated by P2RY12 and P2RX7 receptor signaling and contributes to ATP-triggered K(+) efflux underlying microglial NLRP3 inflammasome assembly and IL1B release. This is Potassium channel subfamily K member 13 from Rattus norvegicus (Rat).